The primary structure comprises 272 residues: Exosome complex component Rrp42 (272 aa).

The protein belongs to the RNase PH family. Rrp42 subfamily. In terms of assembly, component of the archaeal exosome complex. Forms a hexameric ring-like arrangement composed of 3 Rrp41-Rrp42 heterodimers. The hexameric ring associates with a trimer of Rrp4 and/or Csl4 subunits.

It localises to the cytoplasm. Functionally, non-catalytic component of the exosome, which is a complex involved in RNA degradation. Contributes to the structuring of the Rrp41 active site. The chain is Exosome complex component Rrp42 from Thermococcus onnurineus (strain NA1).